Here is a 226-residue protein sequence, read N- to C-terminus: Ribose-5-phosphate isomerase A (226 aa).

Substrate is bound by residues 33 to 36 (TGST), 86 to 89 (DGAD), and 99 to 102 (KGGG). The active-site Proton acceptor is the Glu108. Lys126 provides a ligand contact to substrate.

This sequence belongs to the ribose 5-phosphate isomerase family. Homodimer.

It catalyses the reaction aldehydo-D-ribose 5-phosphate = D-ribulose 5-phosphate. Its pathway is carbohydrate degradation; pentose phosphate pathway; D-ribose 5-phosphate from D-ribulose 5-phosphate (non-oxidative stage): step 1/1. Functionally, catalyzes the reversible conversion of ribose-5-phosphate to ribulose 5-phosphate. This is Ribose-5-phosphate isomerase A from Bordetella parapertussis (strain 12822 / ATCC BAA-587 / NCTC 13253).